A 444-amino-acid chain; its full sequence is Proline--tRNA ligase (444 aa).

It belongs to the class-II aminoacyl-tRNA synthetase family. ProS type 2 subfamily. As to quaternary structure, homodimer.

It localises to the cytoplasm. It carries out the reaction tRNA(Pro) + L-proline + ATP = L-prolyl-tRNA(Pro) + AMP + diphosphate. Functionally, catalyzes the attachment of proline to tRNA(Pro) in a two-step reaction: proline is first activated by ATP to form Pro-AMP and then transferred to the acceptor end of tRNA(Pro). This Maricaulis maris (strain MCS10) (Caulobacter maris) protein is Proline--tRNA ligase.